A 525-amino-acid chain; its full sequence is MTENIHKHRILILDFGSQYTQLVARRVRELGVYCELWAWDVTEAQIRDFNPSGIILSGGPESTTEENSPRAPQYVFEAGVPVFGICYGMQTMAMQLGGHVEASNEREFGYAQVEVVNDSALVRGIEDALTADGKPLLDVWMSHGDKVTAIPSDFVTVASTESCPFAIMANEEKRFYGVQFHPEVTHTRQGMRMLERFVRDICQCEALWTPAKIIDDAVARIREQVGDDKVILGLSGGVDSSVTAMLLHRAIGKNLTCVFVDNGLLRLNEAEQVLDMFGDHFGLNIVHVPAEDRFLSALAGENDPEAKRKIIGRVFVEVFDEEALKLEDVKWLAQGTIYPDVIESAASATGKAHVIKSHHNVGGLPKEMKMGLVEPLKELFKDEVRKIGLELGLPYDMLYRHPFPGPGLGVRVLGEVKKEYCDLLRRADAIFIEELRKADLYDKVSQAFTVFLPVRSVGVMGDGRKYDWVVSLRAVETIDFMTAHWAHLPYDFLGRVSNRIINEVNGISRVVYDISGKPPATIEWE.

Residues 9 to 207 (RILILDFGSQ…VRDICQCEAL (199 aa)) form the Glutamine amidotransferase type-1 domain. Cys-86 functions as the Nucleophile in the catalytic mechanism. Active-site residues include His-181 and Glu-183. In terms of domain architecture, GMPS ATP-PPase spans 208–400 (WTPAKIIDDA…LGLPYDMLYR (193 aa)). Residue 235-241 (SGGVDSS) coordinates ATP.

Homodimer.

It catalyses the reaction XMP + L-glutamine + ATP + H2O = GMP + L-glutamate + AMP + diphosphate + 2 H(+). The protein operates within purine metabolism; GMP biosynthesis; GMP from XMP (L-Gln route): step 1/1. Functionally, catalyzes the synthesis of GMP from XMP. The polypeptide is GMP synthase [glutamine-hydrolyzing] (Escherichia coli O127:H6 (strain E2348/69 / EPEC)).